We begin with the raw amino-acid sequence, 163 residues long: Cell division protein SepF (163 aa).

Residues 25-53 (SVAPHSGEERESAFSRRSAERAERTERPT) form a disordered region. Basic and acidic residues predominate over residues 30-51 (SGEERESAFSRRSAERAERTER).

This sequence belongs to the SepF family. In terms of assembly, homodimer. Interacts with FtsZ.

It is found in the cytoplasm. Cell division protein that is part of the divisome complex and is recruited early to the Z-ring. Probably stimulates Z-ring formation, perhaps through the cross-linking of FtsZ protofilaments. Its function overlaps with FtsA. This Heliobacterium modesticaldum (strain ATCC 51547 / Ice1) protein is Cell division protein SepF.